Consider the following 223-residue polypeptide: Golgi to ER traffic protein 1 (223 aa).

A topological domain (lumenal) is located at residue Met1. Residues 2–21 form a helical membrane-spanning segment; sequence SWVVAIAVVFVVVLKVLEYS. Over 22-105 the chain is Cytoplasmic; the sequence is TSYHDLVLQS…QIKGHLKKVK (84 aa). A coiled-coil region spans residues 56 to 105; that stretch reads ENKSISAQDNYAKWTKNNRKLDKLDKEITELGAQLKAHNEQIKGHLKKVK. The helical transmembrane segment at 106 to 126 threads the bilayer; that stretch reads LLLLTVPFLCFKLWKGKHIVY. The Lumenal portion of the chain corresponds to 127 to 177; sequence NLPHHQMFPQLVAGVWSQGWLYLAILPLQLAKSIVTGSSFAIETASFPHMG. The chain crosses the membrane as a helical span at residues 178–194; that stretch reads VSLGIWLWALNSVISNI. Residues 195 to 223 lie on the Cytoplasmic side of the membrane; the sequence is EFMTMQLWAKPVSKPSKKLEIVTDEIKVD.

It belongs to the WRB/GET1 family. In terms of assembly, component of the Golgi to ER traffic (GET) complex, which is composed of GET1, GET2 and GET3. Within the complex, GET1 and GET2 form a heterotetramer which is stabilized by phosphatidylinositol binding and which binds to the GET3 homodimer.

The protein resides in the endoplasmic reticulum membrane. Its subcellular location is the golgi apparatus membrane. Its function is as follows. Required for the post-translational delivery of tail-anchored (TA) proteins to the endoplasmic reticulum. Together with GET2, acts as a membrane receptor for soluble GET3, which recognizes and selectively binds the transmembrane domain of TA proteins in the cytosol. The GET complex cooperates with the HDEL receptor ERD2 to mediate the ATP-dependent retrieval of resident ER proteins that contain a C-terminal H-D-E-L retention signal from the Golgi to the ER. The protein is Golgi to ER traffic protein 1 of Candida glabrata (strain ATCC 2001 / BCRC 20586 / JCM 3761 / NBRC 0622 / NRRL Y-65 / CBS 138) (Yeast).